Consider the following 164-residue polypeptide: R-phycoerythrin alpha chain (164 aa).

C82 and C139 together coordinate (2R,3E)-phycoerythrobilin.

This sequence belongs to the phycobiliprotein family. In terms of assembly, heterodimer of an alpha and a beta chain. In terms of processing, contains two covalently linked bilin chromophores.

It is found in the plastid. The protein resides in the chloroplast thylakoid membrane. In terms of biological role, light-harvesting photosynthetic bile pigment-protein from the phycobiliprotein complex. This Lophosiphonia boldii (Red alga) protein is R-phycoerythrin alpha chain (cpeA).